Consider the following 142-residue polypeptide: Chorion protein S16 (142 aa).

An N-terminal signal peptide occupies residues 1-21 (MSANYMRLLCLMACCLSICLA).

It belongs to the chorion protein S16 family.

The protein resides in the secreted. Functionally, chorion membrane (egg shell) protein; plays a role in protecting the egg from the environment. The protein is Chorion protein S16 (Cp16) of Drosophila grimshawi (Hawaiian fruit fly).